Consider the following 223-residue polypeptide: UPF0441 protein KPK_0672 (223 aa).

Residues 165–223 (SYGAAQPGRTMNVPKTAMAPKPATTTTVTRGGFGESVAKQSTMQRSAAGSTSSSRSMGG) are disordered. Composition is skewed to low complexity over residues 177-193 (VPKT…TTVT) and 209-223 (RSAA…SMGG).

This sequence belongs to the UPF0441 family.

The polypeptide is UPF0441 protein KPK_0672 (Klebsiella pneumoniae (strain 342)).